The primary structure comprises 147 residues: Protein Turandot Z (147 aa).

The first 23 residues, 1–23, serve as a signal peptide directing secretion; that stretch reads MYFAIRLSFVLAVLICLTGNGSA.

The protein belongs to the Turandot family.

The protein localises to the secreted. Its function is as follows. A humoral factor that may play a role in stress tolerance. The protein is Protein Turandot Z of Drosophila melanogaster (Fruit fly).